A 900-amino-acid chain; its full sequence is Iodate reductase subunit IdrA (900 aa).

Residues 1–21 are disordered; the sequence is MSENIKQGGAGTFMQAPQDSV. Residues Cys-35, Cys-38, and Cys-42 each contribute to the [3Fe-4S] cluster site.

It belongs to the prokaryotic molybdopterin-containing oxidoreductase family. The iodate reductase (Idr) complex is composed of a molybdopterin-dependent iodate reductase (IdrA and IdrB subunits) and two associated peroxidases (IdrP1 and IdrP2). [3Fe-4S] cluster serves as cofactor. The cofactor is Mo-bis(molybdopterin guanine dinucleotide).

It localises to the periplasm. Its function is as follows. Involved in iodate respiration. May accept electrons from cytochrome c551, and catalyze the reduction of iodate (IO(3)(-)) to produce the chemically unstable intermediate hypoiodous acid (HIO). This intermediate then undergoes abiotic disproportionation to yield two molecules of iodide (I(-)) and one molecule of iodate. The resultant iodate subsequently cycles back into the reductive pathway. The initial reduction of iodate may inadvertently produce low levels of incidental toxic H(2)O(2), which is detoxified by IdrP1 and IdrP2. This chain is Iodate reductase subunit IdrA, found in Denitromonas iodatirespirans.